A 250-amino-acid chain; its full sequence is Triosephosphate isomerase (250 aa).

The substrate site is built by Asn10 and Lys12. Catalysis depends on His94, which acts as the Electrophile. Glu167 serves as the catalytic Proton acceptor.

It belongs to the triosephosphate isomerase family. As to quaternary structure, homodimer.

The protein localises to the cytoplasm. The enzyme catalyses D-glyceraldehyde 3-phosphate = dihydroxyacetone phosphate. The protein operates within carbohydrate biosynthesis; gluconeogenesis. Its pathway is carbohydrate degradation; glycolysis; D-glyceraldehyde 3-phosphate from glycerone phosphate: step 1/1. The protein is Triosephosphate isomerase of Taenia solium (Pork tapeworm).